Consider the following 135-residue polypeptide: Large-conductance mechanosensitive channel (135 aa).

Helical transmembrane passes span 10–30 (FAMK…AAFG) and 76–96 (GAFI…FCAI).

Belongs to the MscL family. Homopentamer.

It is found in the cell inner membrane. In terms of biological role, channel that opens in response to stretch forces in the membrane lipid bilayer. May participate in the regulation of osmotic pressure changes within the cell. The chain is Large-conductance mechanosensitive channel from Proteus mirabilis (strain HI4320).